The primary structure comprises 22 residues: Mu-conotoxin GIIIC (22 aa).

3 disulfides stabilise this stretch: Cys-3–Cys-15, Cys-4–Cys-20, and Cys-10–Cys-21. 4-hydroxyproline is present on residues Pro-6, Pro-7, and Pro-17. Position 22 is an alanine amide (Ala-22).

Belongs to the conotoxin M superfamily. Expressed by the venom duct.

The protein localises to the secreted. In terms of biological role, mu-conotoxins block voltage-gated sodium channels (Nav). This toxin shows potent activity on Nav1.4/SCN4A (IC(50)=286 nM), and weak activity on mNav1.6/SCN8A. The sequence is that of Mu-conotoxin GIIIC from Conus geographus (Geography cone).